A 90-amino-acid polypeptide reads, in one-letter code: DNA-directed RNA polymerase subunit omega (90 aa).

This sequence belongs to the RNA polymerase subunit omega family. The RNAP catalytic core consists of 2 alpha, 1 beta, 1 beta' and 1 omega subunit. When a sigma factor is associated with the core the holoenzyme is formed, which can initiate transcription.

It catalyses the reaction RNA(n) + a ribonucleoside 5'-triphosphate = RNA(n+1) + diphosphate. Its function is as follows. Promotes RNA polymerase assembly. Latches the N- and C-terminal regions of the beta' subunit thereby facilitating its interaction with the beta and alpha subunits. The protein is DNA-directed RNA polymerase subunit omega of Alteromonas mediterranea (strain DSM 17117 / CIP 110805 / LMG 28347 / Deep ecotype).